The chain runs to 497 residues: Glutamyl-tRNA(Gln) amidotransferase subunit A (497 aa).

Catalysis depends on charge relay system residues Lys85 and Ser160. The active-site Acyl-ester intermediate is Ser184.

Belongs to the amidase family. GatA subfamily. Heterotrimer of A, B and C subunits.

It catalyses the reaction L-glutamyl-tRNA(Gln) + L-glutamine + ATP + H2O = L-glutaminyl-tRNA(Gln) + L-glutamate + ADP + phosphate + H(+). Functionally, allows the formation of correctly charged Gln-tRNA(Gln) through the transamidation of misacylated Glu-tRNA(Gln) in organisms which lack glutaminyl-tRNA synthetase. The reaction takes place in the presence of glutamine and ATP through an activated gamma-phospho-Glu-tRNA(Gln). The sequence is that of Glutamyl-tRNA(Gln) amidotransferase subunit A (gatA) from Mycobacterium leprae (strain TN).